Here is a 345-residue protein sequence, read N- to C-terminus: Solute carrier family 25 member 43 (345 aa).

Solcar repeat units lie at residues 11-100, 104-195, and 199-297; these read TSSQ…IDEL, SQWR…QERH, and TSLQ…LYRN. 6 helical membrane-spanning segments follow: residues 16–36, 67–87, 109–129, 165–185, 204–224, and 261–281; these read LMCV…LEVV, FWKG…IHLA, IVAG…LEVV, GFSL…AVYI, FING…FETV, and VMAL…YFGL.

The protein belongs to the mitochondrial carrier (TC 2.A.29) family.

The protein localises to the mitochondrion inner membrane. This chain is Solute carrier family 25 member 43 (slc25a43), found in Danio rerio (Zebrafish).